Consider the following 315-residue polypeptide: Ester hydrolase C11orf54 homolog (315 aa).

Histidine 266, histidine 268, and histidine 278 together coordinate Zn(2+).

Monomer. Zn(2+) is required as a cofactor.

It is found in the nucleus. It localises to the cytoplasm. Its function is as follows. Exhibits ester hydrolase activity on the substrate p-nitrophenyl acetate, in vitro. Regulates DNA damage and repair by regulating HIF1A degradation via chaperone-mediated autophagy (CMA). In Rattus norvegicus (Rat), this protein is Ester hydrolase C11orf54 homolog.